The chain runs to 162 residues: Cyclic pyranopterin monophosphate synthase (162 aa).

Substrate contacts are provided by residues 75–77 and 116–117; these read MCH and ME. Asp-131 is a catalytic residue.

This sequence belongs to the MoaC family. In terms of assembly, homohexamer; trimer of dimers.

It carries out the reaction (8S)-3',8-cyclo-7,8-dihydroguanosine 5'-triphosphate = cyclic pyranopterin phosphate + diphosphate. Its pathway is cofactor biosynthesis; molybdopterin biosynthesis. Its function is as follows. Catalyzes the conversion of (8S)-3',8-cyclo-7,8-dihydroguanosine 5'-triphosphate to cyclic pyranopterin monophosphate (cPMP). This is Cyclic pyranopterin monophosphate synthase from Staphylococcus epidermidis (strain ATCC 35984 / DSM 28319 / BCRC 17069 / CCUG 31568 / BM 3577 / RP62A).